Here is a 200-residue protein sequence, read N- to C-terminus: MFAYFRGKLTSVLPEEVVVEVSGIAYQFLISAATHRQLPEQGSEVFLFSHLVVREDLLQLYGFSGEEERQLFRLLLLTTGVGPKLALALLSGLSVQDIHDAILTNTPERLYGITGVGKKTAARIILELRDKVLKLSPVSALASPARLSSTLLRDDAVNALVTLGFSRIIVQKAVVAILEQNPGLTVEEVIKAALVSIHNS.

A domain I region spans residues 1–64 (MFAYFRGKLT…EDLLQLYGFS (64 aa)). Residues 65 to 143 (GEEERQLFRL…KLSPVSALAS (79 aa)) are domain II. A flexible linker region spans residues 144 to 154 (PARLSSTLLRD). A domain III region spans residues 154–200 (DDAVNALVTLGFSRIIVQKAVVAILEQNPGLTVEEVIKAALVSIHNS).

It belongs to the RuvA family. As to quaternary structure, homotetramer. Forms an RuvA(8)-RuvB(12)-Holliday junction (HJ) complex. HJ DNA is sandwiched between 2 RuvA tetramers; dsDNA enters through RuvA and exits via RuvB. An RuvB hexamer assembles on each DNA strand where it exits the tetramer. Each RuvB hexamer is contacted by two RuvA subunits (via domain III) on 2 adjacent RuvB subunits; this complex drives branch migration. In the full resolvosome a probable DNA-RuvA(4)-RuvB(12)-RuvC(2) complex forms which resolves the HJ.

It is found in the cytoplasm. The RuvA-RuvB-RuvC complex processes Holliday junction (HJ) DNA during genetic recombination and DNA repair, while the RuvA-RuvB complex plays an important role in the rescue of blocked DNA replication forks via replication fork reversal (RFR). RuvA specifically binds to HJ cruciform DNA, conferring on it an open structure. The RuvB hexamer acts as an ATP-dependent pump, pulling dsDNA into and through the RuvAB complex. HJ branch migration allows RuvC to scan DNA until it finds its consensus sequence, where it cleaves and resolves the cruciform DNA. The polypeptide is Holliday junction branch migration complex subunit RuvA (Pelodictyon phaeoclathratiforme (strain DSM 5477 / BU-1)).